A 115-amino-acid chain; its full sequence is Histone H2A-Bbd type 2/3 (115 aa).

Residues 1–21 (MPRRRRRRGSSGAGGRGRTCS) form a disordered region. The tract at residues 87–115 (LLDMVVHNDRLLSTLFNTTTISQVAPGED) is docking domain.

The protein belongs to the histone H2A family. In terms of assembly, the nucleosome is a histone octamer containing two molecules each of H2A, H2B, H3 and H4 assembled in one H3-H4 heterotetramer and two H2A-H2B heterodimers. May be incorporated into a proportion of nucleosomes, replacing one or more H2A molecules. As to expression, present in mature sperm.

It is found in the nucleus. It localises to the chromosome. Its function is as follows. Atypical histone H2A which can replace conventional H2A in some nucleosomes and is associated with active transcription and mRNA processing. Nucleosomes wrap and compact DNA into chromatin, limiting DNA accessibility to the cellular machineries which require DNA as a template. Histones thereby play a central role in transcription regulation, DNA repair, DNA replication and chromosomal stability. Nucleosomes containing this histone are less rigid and organize less DNA than canonical nucleosomes in vivo. They are enriched in actively transcribed genes and associate with the elongating form of RNA polymerase. They associate with spliceosome components and are required for mRNA splicing. May participate in spermatogenesis. This is Histone H2A-Bbd type 2/3 from Homo sapiens (Human).